A 381-amino-acid chain; its full sequence is Glucose-1-phosphate adenylyltransferase (381 aa).

Residues Y100, G165, 180 to 181, and S191 each bind alpha-D-glucose 1-phosphate; that span reads EK.

Belongs to the bacterial/plant glucose-1-phosphate adenylyltransferase family. Homotetramer.

It carries out the reaction alpha-D-glucose 1-phosphate + ATP + H(+) = ADP-alpha-D-glucose + diphosphate. The protein operates within glycan biosynthesis; glycogen biosynthesis. Its function is as follows. Involved in the biosynthesis of ADP-glucose, a building block required for the elongation reactions to produce glycogen. Catalyzes the reaction between ATP and alpha-D-glucose 1-phosphate (G1P) to produce pyrophosphate and ADP-Glc. The sequence is that of Glucose-1-phosphate adenylyltransferase from Mycoplasma mobile (strain ATCC 43663 / 163K / NCTC 11711) (Mesomycoplasma mobile).